The following is a 292-amino-acid chain: 2-(5''-triphosphoribosyl)-3'-dephosphocoenzyme-A synthase (292 aa).

This sequence belongs to the CitG/MdcB family.

It catalyses the reaction 3'-dephospho-CoA + ATP = 2'-(5''-triphospho-alpha-D-ribosyl)-3'-dephospho-CoA + adenine. Catalyzes the formation of 2-(5''-triphosphoribosyl)-3'-dephosphocoenzyme-A, the precursor of the prosthetic group of the holo-acyl carrier protein (gamma chain) of citrate lyase, from ATP and dephospho-CoA. This is 2-(5''-triphosphoribosyl)-3'-dephosphocoenzyme-A synthase from Escherichia coli O7:K1 (strain IAI39 / ExPEC).